Here is a 755-residue protein sequence, read N- to C-terminus: PWWP domain-containing protein 2A (755 aa).

Residues 1 to 15 (MAAVAAEAAATAASP) are compositionally biased toward low complexity. The segment at 1 to 153 (MAAVAAEAAA…VPPAGGDSTV (153 aa)) is disordered. The segment covering 64–76 (DEPPLPPPPPPPG) has biased composition (pro residues). Phosphoserine is present on residues S81, S102, S116, and S119. The span at 112–126 (ELPPSPASPPEQPPA) shows a compositional bias: pro residues. Residues 148–373 (GGDSTVSQLI…KLKTDHKVDG (226 aa)) are interaction with HDAC1 and MTA1. Residue K208 forms a Glycyl lysine isopeptide (Lys-Gly) (interchain with G-Cter in SUMO2) linkage. Disordered regions lie at residues 282–301 (YNQS…KRKM), 334–384 (KEIR…KRNA), 400–562 (KVSA…GSKN), and 578–626 (SSAS…SKEE). Residues 292 to 301 (RKIKRPKRKM) are compositionally biased toward basic residues. Composition is skewed to basic and acidic residues over residues 346–356 (SKYEDKKRRNE) and 368–381 (DHKV…ESQK). Polar residues predominate over residues 403–421 (AQANTSKAQLSTKKVLQSK). Residues 422-444 (NMDHAKAREVLKIAKEKAQKKQN) are compositionally biased toward basic and acidic residues. An interaction with the H2A.Z/H2AZ1 region spans residues 423 to 574 (MDHAKAREVL…SVYMTLNQKK (152 aa)). The span at 508–527 (SRCTSTRSAGEAPSENQSPS) shows a compositional bias: polar residues. Positions 593-603 (SSNSECSSSES) are enriched in low complexity. Residues 655 to 715 (VGDIVWAKIY…LSQLSPFLEN (61 aa)) form the PWWP domain.

In terms of assembly, component of a MTA1-specific subcomplex of the NuRD complex (M1HR), composed of PWWP2A, MTA1/2, HDAC1/2, and RBBP4/7 but does not contain CHD4 and MBD3. Interacts with MTA1; the interaction mediates the association of PWWP2A with the M1HR complex. Interacts with H2A.Z/H2AZ1. Interacts (via PWWP domain) with histone H3 trimethylated at 'Lys-36' (H3K36me3). Does not interact with CHD4 and MBD3. As to quaternary structure, interacts with MTA1 and with HDAC1 in a MTA1-dependent manner. Does not interact with CHD4 and MBD3.

The protein localises to the nucleus. Functionally, chromatin-binding protein that acts as an adapter between distinct nucleosome components (H3K36me3 or H2A.Z) and chromatin-modifying complexes, contributing to the regulation of the levels of histone acetylation at actively transcribed genes. Competes with CHD4 and MBD3 for interaction with MTA1 to form a NuRD subcomplex, preventing the formation of full NuRD complex (containing CHD4 and MBD3), leading to recruitment of HDACs to gene promoters resulting in turn in the deacetylation of nearby H3K27 and H2A.Z. Plays a role in facilitating transcriptional elongation and repression of spurious transcription initiation through regulation of histone acetylation. Essential for proper mitosis progression. The sequence is that of PWWP domain-containing protein 2A (PWWP2A) from Homo sapiens (Human).